A 248-amino-acid polypeptide reads, in one-letter code: Tropomyosin alpha-4 chain (248 aa).

Ala-2 is subject to N-acetylalanine. The stretch at 2 to 248 (AGLNSLEAVK…DQTLNELNCI (247 aa)) forms a coiled coil. Ser-6 is modified (phosphoserine). The tract at residues 15 to 47 (QALQQQADEAEDRAQGLQRELDGERERREKAEG) is disordered. Residues 33–47 (RELDGERERREKAEG) are compositionally biased toward basic and acidic residues. 2 positions are modified to N6-acetyllysine: Lys-177 and Lys-215. The residue at position 216 (Thr-216) is a Phosphothreonine.

It belongs to the tropomyosin family. As to quaternary structure, homodimer. Heterodimer of an alpha (TPM1, TPM3 or TPM4) and a beta (TPM2) chain. In terms of tissue distribution, detected in cardiac tissue and platelets, the form found in cardiac tissue is a higher molecular weight than the form found in platelets. Expressed at higher levels in the platelets of hypertensive patients with cardiac hypertrophy than in the platelets of hypertensive patients without cardiac hypertrophy (at protein level).

It is found in the cytoplasm. It localises to the cytoskeleton. In terms of biological role, binds to actin filaments in muscle and non-muscle cells. Plays a central role, in association with the troponin complex, in the calcium dependent regulation of vertebrate striated muscle contraction. Smooth muscle contraction is regulated by interaction with caldesmon. In non-muscle cells is implicated in stabilizing cytoskeleton actin filaments. Binds calcium. Plays a role in platelet biogenesis. The chain is Tropomyosin alpha-4 chain (TPM4) from Homo sapiens (Human).